The sequence spans 347 residues: Pre-B-cell leukemia transcription factor 1 (347 aa).

The disordered stretch occupies residues 1-37 (MDDQPRLMHSHPGVGMAGHPSLSQHMQDGTGANEGDV). One can recognise a PBC domain in the interval 38–232 (GRKQDIGDIL…VMILRSRFLD (195 aa)). Residues 45–124 (DILQQIMTIT…EGVAGPEKGG (80 aa)) form a PBC-A region. Residues 127 to 232 (AAAAAAAAAS…VMILRSRFLD (106 aa)) form a PBC-B region. Positions 233-295 (ARRKRRNFNK…NKRIRYKKNI (63 aa)) form a DNA-binding region, homeobox; TALE-type. A compositionally biased stretch (polar residues) spans 318-331 (VHGSQANSPSTPSS). Positions 318 to 347 (VHGSQANSPSTPSSAGGYPSPCYQSDRRIQ) are disordered.

It belongs to the TALE/PBX homeobox family. As to quaternary structure, forms a heterodimer with isoform 2 of meis1; the interaction is necessary for neural fate induction. Shows broad, weak expression from blastula through gastrula stages. At stage 14/15, expressed in a broad arc that gives rise to the forebrain and eyes. More intensely expressed in the lateral neural folds (presumptive neural crest) and as horizontal stripes in the posterior neural plate that give rise to the hindbrain. As development proceeds, expression progresses posteriorly along the neural folds and at stage 21, expression is pronounced in the prospective hindbrain and in migratory neural crest cells. At later stages (stage 26), expression becomes intense within the dorsal portion of the forebrain, and in the optic cup, caudal branchial arch, peripheral to the pronephric anlage, and in the dorsal anterior half of the spinal cord. Expression remains robust in the hindbrain but gradually becomes more restricted. At stage 28, expressed in the dorsal lateral portion of the neural tube and in the somatic layer of the lateral plate mesoderm that surrounds the pronephric anlage.

It localises to the nucleus. Functionally, acts as a transcriptional activator in complex with isoform 2 of meis1, to induce posterior neural and neural crest gene expression, and thereby specify hindbrain and neural crest cell fate. Binds to a highly conserved region in the promoter of the neural crest gene zic3. Required for the nuclear transport or retention of isoform 2 of meis1. The polypeptide is Pre-B-cell leukemia transcription factor 1 (pbx1) (Xenopus laevis (African clawed frog)).